We begin with the raw amino-acid sequence, 681 residues long: Methionine--tRNA ligase (681 aa).

The 'HIGH' region signature appears at 15–25 (PYANGPIHLGH). 4 residues coordinate Zn(2+): Cys146, Cys149, Cys159, and Cys162. A 'KMSKS' region motif is present at residues 332-336 (KMSKS). Lys335 lines the ATP pocket. A disordered region spans residues 547-569 (DNMAQAPKDNGKAKKDKKEAKSE). The span at 555–569 (DNGKAKKDKKEAKSE) shows a compositional bias: basic and acidic residues. Residues 580-681 (DFAKIDLRIA…SGAQPGMQVK (102 aa)) form the tRNA-binding domain.

It belongs to the class-I aminoacyl-tRNA synthetase family. MetG type 1 subfamily. As to quaternary structure, homodimer. Zn(2+) is required as a cofactor.

It is found in the cytoplasm. The catalysed reaction is tRNA(Met) + L-methionine + ATP = L-methionyl-tRNA(Met) + AMP + diphosphate. In terms of biological role, is required not only for elongation of protein synthesis but also for the initiation of all mRNA translation through initiator tRNA(fMet) aminoacylation. In Hahella chejuensis (strain KCTC 2396), this protein is Methionine--tRNA ligase.